The primary structure comprises 164 residues: Ubiquitin-fold modifier-conjugating enzyme 1 (164 aa).

Catalysis depends on Cys116, which acts as the Glycyl thioester intermediate.

The protein belongs to the ubiquitin-conjugating enzyme family. UFC1 subfamily.

In terms of biological role, E2-like enzyme which forms an intermediate with UFM1 via a thioester linkage. The polypeptide is Ubiquitin-fold modifier-conjugating enzyme 1 (Drosophila willistoni (Fruit fly)).